We begin with the raw amino-acid sequence, 441 residues long: DNA double-strand break repair protein Mre11 (441 aa).

Residues Asp-9, His-11, Asp-50, and Asn-85 each contribute to the Mn(2+) site. His-86 serves as the catalytic Proton donor. Positions 150, 181, and 183 each coordinate Mn(2+). A disordered region spans residues Glu-360–Ala-441. Acidic residues-rich tracts occupy residues Ala-379–Ala-403 and Thr-411–Thr-425.

Belongs to the MRE11/RAD32 family. In terms of assembly, homodimer. Forms a heterotetramer composed of two Mre11 subunits and two Rad50 subunits. Requires Mn(2+) as cofactor.

Its activity is regulated as follows. Nuclease activity is regulated by Rad50. Part of the Rad50/Mre11 complex, which is involved in the early steps of DNA double-strand break (DSB) repair. Mre11 binds to DSB ends and has both double-stranded 3'-5' exonuclease activity and single-stranded endonuclease activity. In polyploid organisms, the Rad50/Mre11 complex appears to restrain the repair of double-strand breaks by homologous recombination, allowing another pathway to act as the primary mode of repair. The sequence is that of DNA double-strand break repair protein Mre11 from Haloferax volcanii (strain ATCC 29605 / DSM 3757 / JCM 8879 / NBRC 14742 / NCIMB 2012 / VKM B-1768 / DS2) (Halobacterium volcanii).